The following is a 259-amino-acid chain: Adenosylcobinamide-GDP ribazoletransferase (259 aa).

Transmembrane regions (helical) follow at residues 9 to 29 (NLFF…WIEV), 43 to 63 (LVGL…LYWV), 64 to 84 (SPSI…GGFH), 118 to 138 (ALAL…LALF), 143 to 163 (VSLA…SFIF), and 190 to 210 (ILLA…ALVL).

This sequence belongs to the CobS family. Mg(2+) serves as cofactor.

Its subcellular location is the cell inner membrane. The enzyme catalyses alpha-ribazole + adenosylcob(III)inamide-GDP = adenosylcob(III)alamin + GMP + H(+). It carries out the reaction alpha-ribazole 5'-phosphate + adenosylcob(III)inamide-GDP = adenosylcob(III)alamin 5'-phosphate + GMP + H(+). It functions in the pathway cofactor biosynthesis; adenosylcobalamin biosynthesis; adenosylcobalamin from cob(II)yrinate a,c-diamide: step 7/7. Joins adenosylcobinamide-GDP and alpha-ribazole to generate adenosylcobalamin (Ado-cobalamin). Also synthesizes adenosylcobalamin 5'-phosphate from adenosylcobinamide-GDP and alpha-ribazole 5'-phosphate. This chain is Adenosylcobinamide-GDP ribazoletransferase, found in Shewanella pealeana (strain ATCC 700345 / ANG-SQ1).